A 373-amino-acid chain; its full sequence is Transaldolase (373 aa).

The Schiff-base intermediate with substrate role is filled by lysine 143.

It belongs to the transaldolase family. Type 2 subfamily.

It is found in the cytoplasm. The catalysed reaction is D-sedoheptulose 7-phosphate + D-glyceraldehyde 3-phosphate = D-erythrose 4-phosphate + beta-D-fructose 6-phosphate. It functions in the pathway carbohydrate degradation; pentose phosphate pathway; D-glyceraldehyde 3-phosphate and beta-D-fructose 6-phosphate from D-ribose 5-phosphate and D-xylulose 5-phosphate (non-oxidative stage): step 2/3. Its function is as follows. Transaldolase is important for the balance of metabolites in the pentose-phosphate pathway. The polypeptide is Transaldolase (tal) (Mycobacterium bovis (strain ATCC BAA-935 / AF2122/97)).